Consider the following 88-residue polypeptide: Large ribosomal subunit protein bL27 (88 aa).

Residues 1–24 (MAHKKAGGSSRNGRDSEGRRLGVK) are disordered.

Belongs to the bacterial ribosomal protein bL27 family.

This chain is Large ribosomal subunit protein bL27, found in Methylobacterium radiotolerans (strain ATCC 27329 / DSM 1819 / JCM 2831 / NBRC 15690 / NCIMB 10815 / 0-1).